A 130-amino-acid polypeptide reads, in one-letter code: Holo-[acyl-carrier-protein] synthase (130 aa).

Mg(2+)-binding residues include aspartate 9 and glutamate 58.

This sequence belongs to the P-Pant transferase superfamily. AcpS family. Mg(2+) serves as cofactor.

It localises to the cytoplasm. It carries out the reaction apo-[ACP] + CoA = holo-[ACP] + adenosine 3',5'-bisphosphate + H(+). Its function is as follows. Transfers the 4'-phosphopantetheine moiety from coenzyme A to a Ser of acyl-carrier-protein. This is Holo-[acyl-carrier-protein] synthase from Mycobacterium bovis (strain ATCC BAA-935 / AF2122/97).